Consider the following 509-residue polypeptide: GMP synthase [glutamine-hydrolyzing] (509 aa).

In terms of domain architecture, Glutamine amidotransferase type-1 spans 4–193 (NVLILDFGSQ…LVKIAQVPQN (190 aa)). The active-site Nucleophile is Cys-79. Residues His-167 and Glu-169 contribute to the active site. The 191-residue stretch at 194–384 (FTPNAFVSDM…LGIDAELLGR (191 aa)) folds into the GMPS ATP-PPase domain. Residue 221-227 (SGGVDST) coordinates ATP.

As to quaternary structure, homodimer.

The catalysed reaction is XMP + L-glutamine + ATP + H2O = GMP + L-glutamate + AMP + diphosphate + 2 H(+). The protein operates within purine metabolism; GMP biosynthesis; GMP from XMP (L-Gln route): step 1/1. Its function is as follows. Catalyzes the synthesis of GMP from XMP. This chain is GMP synthase [glutamine-hydrolyzing], found in Flavobacterium psychrophilum (strain ATCC 49511 / DSM 21280 / CIP 103535 / JIP02/86).